Here is a 72-residue protein sequence, read N- to C-terminus: Translation initiation factor IF-1 (72 aa).

The S1-like domain occupies 1–72 (MSKEDVIEVE…SRGRIVYRFK (72 aa)).

This sequence belongs to the IF-1 family. As to quaternary structure, component of the 30S ribosomal translation pre-initiation complex which assembles on the 30S ribosome in the order IF-2 and IF-3, IF-1 and N-formylmethionyl-tRNA(fMet); mRNA recruitment can occur at any time during PIC assembly.

It is found in the cytoplasm. One of the essential components for the initiation of protein synthesis. Stabilizes the binding of IF-2 and IF-3 on the 30S subunit to which N-formylmethionyl-tRNA(fMet) subsequently binds. Helps modulate mRNA selection, yielding the 30S pre-initiation complex (PIC). Upon addition of the 50S ribosomal subunit IF-1, IF-2 and IF-3 are released leaving the mature 70S translation initiation complex. This is Translation initiation factor IF-1 from Desulfitobacterium hafniense (strain Y51).